The chain runs to 338 residues: Sporulation protein YdcC (338 aa).

Residues 8-25 (FVLLLTGLLAVLILSACG) traverse the membrane as a helical segment.

The protein resides in the cell membrane. Required for efficient sporulation. The sequence is that of Sporulation protein YdcC (ydcC) from Bacillus subtilis (strain 168).